The following is a 1322-amino-acid chain: Chitin synthase chs-1 (1322 aa).

The Extracellular segment spans residues 1-39 (MNDGENYWNAFRSHKRSATDGPTLSPWMVTVLQATKLLL). A helical transmembrane segment spans residues 40–60 (FALCNIVLTLGSVFSKLIVLI). The Cytoplasmic segment spans residues 61–128 (MATNIVPRAH…KGQCGQLVKS (68 aa)). A helical transmembrane segment spans residues 129–149 (VVVLESLRAIGLAVLSFHVFP). Residues 150–156 (QLDLARC) lie on the Extracellular side of the membrane. The chain crosses the membrane as a helical span at residues 157-177 (LVLSACFPLVAVLQRSLVAMV). Residues 178–193 (SAARTGRSFRNRLGRC) are Cytoplasmic-facing. A helical transmembrane segment spans residues 194 to 214 (FVAIPHVIMFLVLMSSCYVWA). The Extracellular portion of the chain corresponds to 215-221 (LFDNKFT). The helical transmembrane segment at 222–242 (AIIALPIGVICTSAGFWESWI) threads the bilayer. The Cytoplasmic portion of the chain corresponds to 243–269 (DTTHSGTSFDELYRLKYAVRKMNTTTK). A helical transmembrane segment spans residues 270–290 (LIVSLMRIVCTVSVLVSAVYI). Residues 291 to 316 (NDHKKLNSSHFVKAFFSFSTRQPHTR) lie on the Extracellular side of the membrane. Asparagine 297 carries an N-linked (GlcNAc...) asparagine glycan. The chain crosses the membrane as a helical span at residues 317 to 337 (LLLLATGIIVLHFVMRGISRF). Residues 338-342 (LAALD) lie on the Cytoplasmic side of the membrane. A helical membrane pass occupies residues 343 to 363 (LHPFSFVHPLSIAPLIAYGYV). The Extracellular segment spans residues 364-396 (RYACQSPTCSIARRLARFGLHWVCDQWFQSARG). A helical transmembrane segment spans residues 397-417 (IASPDFYICLIWLLVGCYRGW). Topologically, residues 418–836 (RLVRQRYFDT…AISYAYIAYQ (419 aa)) are cytoplasmic. Residues 455 to 486 (LNRQEKTMLTEEEDISDENDELRIRNDEVDRV) are a coiled coil. Residues 837-857 (FLVIFFSMLGPAIIFTMLVFA) form a helical membrane-spanning segment. Residues 858–865 (QVAAFELR) lie on the Extracellular side of the membrane. Residues 866–886 (GSDVMLYNGIPIGFFIVLCFT) traverse the membrane as a helical segment. The Cytoplasmic segment spans residues 887–892 (TESNIQ). The chain crosses the membrane as a helical span at residues 893–913 (LIYAKYMSIAYAFVMLAVLVA). Topologically, residues 914-922 (TSSQIVLET) are extracellular. A helical transmembrane segment spans residues 923-943 (VLAPTSLFIVTMVGIFFFAAC). At 944–951 (LHPKEFTN) the chain is on the cytoplasmic side. Residues 952–972 (IIHGVVFFLMIPSTYVFLTLY) form a helical membrane-spanning segment. The Extracellular portion of the chain corresponds to 973–1148 (SLINLNVITW…AVAEGLASLR (176 aa)). A coiled-coil region spans residues 1019-1053 (ISCREKKEHEERREKMEKKMQRMELALRSIESGAD). A helical membrane pass occupies residues 1149–1169 (NQIAFTILLVNSLLALAIFLI). Topologically, residues 1170 to 1209 (QKHKNVLSIKFSPIKNFRWTKMNEMTGQYEETDEPLKIDP) are cytoplasmic. Residues 1210-1230 (LGMGIVVFLLIILFVQTLGML) form a helical membrane-spanning segment. At 1231–1322 (LHRLNTMIGA…MQRSALSTTE (92 aa)) the chain is on the extracellular side.

It belongs to the chitin synthase family. Class IV subfamily.

The protein localises to the cell membrane. It catalyses the reaction [(1-&gt;4)-N-acetyl-beta-D-glucosaminyl](n) + UDP-N-acetyl-alpha-D-glucosamine = [(1-&gt;4)-N-acetyl-beta-D-glucosaminyl](n+1) + UDP + H(+). Functionally, essential for the embryonic synthesis of chitin, a component of the eggshell. The polypeptide is Chitin synthase chs-1 (Caenorhabditis elegans).